The chain runs to 329 residues: Vitamin B12 import system permease protein BtuC (329 aa).

A run of 9 helical transmembrane segments spans residues 18-38, 64-84, 91-111, 115-135, 149-169, 191-208, 243-263, 277-297, and 305-325; these read WLLS…CAGE, LAVL…QALF, PGLL…VLLG, LPGW…TLIL, LLAG…AIYF, WQQS…IWIC, GWMV…GLVI, VLLP…DVVA, and ELPI…WLLL.

The protein belongs to the binding-protein-dependent transport system permease family. FecCD subfamily. As to quaternary structure, the complex is composed of two ATP-binding proteins (BtuD), two transmembrane proteins (BtuC) and a solute-binding protein (BtuF).

The protein localises to the cell inner membrane. Functionally, part of the ABC transporter complex BtuCDF involved in vitamin B12 import. Involved in the translocation of the substrate across the membrane. The protein is Vitamin B12 import system permease protein BtuC of Salmonella arizonae (strain ATCC BAA-731 / CDC346-86 / RSK2980).